Reading from the N-terminus, the 133-residue chain is IgW chain C region, secreted form 2 (133 aa).

The 71-residue stretch at 1-71 folds into the Ig-like domain; the sequence is VISGFYPDSV…TGSRFNDRIS (71 aa). Residues Asn-32 and Asn-112 are each glycosylated (N-linked (GlcNAc...) asparagine). A secretory tail region spans residues 76-133; that stretch reads KGGTVNLPVPGGNTPCTCPPSSCSGCMPKLVYQTDLNVTLENGGQLQYNCHQQACKIK.

As to expression, expressed mainly in lymphoid tissues including spleen, epigonal organ and circulating lymphocytes.

It localises to the secreted. The chain is IgW chain C region, secreted form 2 from Heterodontus francisci (Horn shark).